The sequence spans 396 residues: NADH-quinone oxidoreductase subunit D (396 aa).

It belongs to the complex I 49 kDa subunit family. As to quaternary structure, NDH-1 is composed of 14 different subunits. Subunits NuoB, C, D, E, F, and G constitute the peripheral sector of the complex.

It localises to the cell inner membrane. It catalyses the reaction a quinone + NADH + 5 H(+)(in) = a quinol + NAD(+) + 4 H(+)(out). NDH-1 shuttles electrons from NADH, via FMN and iron-sulfur (Fe-S) centers, to quinones in the respiratory chain. The immediate electron acceptor for the enzyme in this species is believed to be ubiquinone. Couples the redox reaction to proton translocation (for every two electrons transferred, four hydrogen ions are translocated across the cytoplasmic membrane), and thus conserves the redox energy in a proton gradient. This chain is NADH-quinone oxidoreductase subunit D, found in Brucella suis biovar 1 (strain 1330).